The chain runs to 364 residues: UDP-N-acetylglucosamine--N-acetylmuramyl-(pentapeptide) pyrophosphoryl-undecaprenol N-acetylglucosamine transferase (364 aa).

Residues 10–12 (TAG), N124, R161, S195, and Q291 each bind UDP-N-acetyl-alpha-D-glucosamine.

Belongs to the glycosyltransferase 28 family. MurG subfamily.

The protein resides in the cell membrane. The enzyme catalyses di-trans,octa-cis-undecaprenyl diphospho-N-acetyl-alpha-D-muramoyl-L-alanyl-D-glutamyl-meso-2,6-diaminopimeloyl-D-alanyl-D-alanine + UDP-N-acetyl-alpha-D-glucosamine = di-trans,octa-cis-undecaprenyl diphospho-[N-acetyl-alpha-D-glucosaminyl-(1-&gt;4)]-N-acetyl-alpha-D-muramoyl-L-alanyl-D-glutamyl-meso-2,6-diaminopimeloyl-D-alanyl-D-alanine + UDP + H(+). It functions in the pathway cell wall biogenesis; peptidoglycan biosynthesis. Functionally, cell wall formation. Catalyzes the transfer of a GlcNAc subunit on undecaprenyl-pyrophosphoryl-MurNAc-pentapeptide (lipid intermediate I) to form undecaprenyl-pyrophosphoryl-MurNAc-(pentapeptide)GlcNAc (lipid intermediate II). The chain is UDP-N-acetylglucosamine--N-acetylmuramyl-(pentapeptide) pyrophosphoryl-undecaprenol N-acetylglucosamine transferase from Streptomyces coelicolor (strain ATCC BAA-471 / A3(2) / M145).